A 477-amino-acid polypeptide reads, in one-letter code: Ribulose bisphosphate carboxylase large chain (477 aa).

The propeptide occupies 1 to 2; sequence MS. P3 is modified (N-acetylproline). Positions 123 and 173 each coordinate substrate. The Proton acceptor role is filled by K175. Substrate is bound at residue K177. K201, D203, and E204 together coordinate Mg(2+). At K201 the chain carries N6-carboxylysine. Residue H294 is the Proton acceptor of the active site. The substrate site is built by R295, H327, and S379.

This sequence belongs to the RuBisCO large chain family. Type I subfamily. Heterohexadecamer of 8 large chains and 8 small chains; disulfide-linked. The disulfide link is formed within the large subunit homodimers. Mg(2+) serves as cofactor. The disulfide bond which can form in the large chain dimeric partners within the hexadecamer appears to be associated with oxidative stress and protein turnover.

Its subcellular location is the plastid. The protein resides in the chloroplast. The enzyme catalyses 2 (2R)-3-phosphoglycerate + 2 H(+) = D-ribulose 1,5-bisphosphate + CO2 + H2O. It carries out the reaction D-ribulose 1,5-bisphosphate + O2 = 2-phosphoglycolate + (2R)-3-phosphoglycerate + 2 H(+). Its function is as follows. RuBisCO catalyzes two reactions: the carboxylation of D-ribulose 1,5-bisphosphate, the primary event in carbon dioxide fixation, as well as the oxidative fragmentation of the pentose substrate in the photorespiration process. Both reactions occur simultaneously and in competition at the same active site. The sequence is that of Ribulose bisphosphate carboxylase large chain from Avena sativa (Oat).